We begin with the raw amino-acid sequence, 256 residues long: Peptidyl-prolyl cis-trans isomerase FKBP19, chloroplastic (256 aa).

The transit peptide at 1 to 29 (MASISSFGCFPQSTALAGTSSTTRCRTTV) directs the protein to the chloroplast. The transit peptide at 30-88 (AARLADQSDDFAPLRSSGGNCGCVNNSGEFDRRKLLVSSVGLLIGALSYDSKDGDFASA) directs the protein to the thylakoid. Positions 135–254 (GDKVVVDWDG…LFDVELLKIV (120 aa)) constitute a PPIase FKBP-type domain. Serine 164 carries the post-translational modification Phosphoserine.

This sequence belongs to the FKBP-type PPIase family.

The protein resides in the plastid. It is found in the chloroplast thylakoid lumen. The enzyme catalyses [protein]-peptidylproline (omega=180) = [protein]-peptidylproline (omega=0). PPIases accelerate the folding of proteins. It catalyzes the cis-trans isomerization of proline imidic peptide bonds in oligopeptides. In Arabidopsis thaliana (Mouse-ear cress), this protein is Peptidyl-prolyl cis-trans isomerase FKBP19, chloroplastic (FKBP19).